We begin with the raw amino-acid sequence, 387 residues long: Early growth response protein 3 (387 aa).

Residues 241–283 form a disordered region; sequence PGFGSLPQPPLTLKPIRPRKYPNRPSKTPLHERPHACPAEGCD. The span at 269–283 shows a compositional bias: basic and acidic residues; that stretch reads PLHERPHACPAEGCD. 3 consecutive C2H2-type zinc fingers follow at residues 275 to 299, 305 to 327, and 333 to 355; these read HACPAEGCDRRFSRSDELTRHLRIH, FQCRICMRSFSRSDHLTTHIRTH, and FACEFCGRKFARSDERKRHAKIH. Residues 348–387 are disordered; it reads RKRHAKIHLKQKEKKAEKGGAPSASSAPPVSLAPVVTTCA. The span at 350–360 shows a compositional bias: basic residues; the sequence is RHAKIHLKQKE. A compositionally biased stretch (low complexity) spans 368-387; it reads APSASSAPPVSLAPVVTTCA.

The protein belongs to the EGR C2H2-type zinc-finger protein family.

The protein localises to the nucleus. In terms of biological role, probable transcription factor involved in muscle spindle development. The sequence is that of Early growth response protein 3 (EGR3) from Homo sapiens (Human).